The chain runs to 134 residues: Replication enhancer protein (134 aa).

This sequence belongs to the geminiviridae replication enhancer protein family. In terms of assembly, homooligomer. Interacts with the replication-associated protein (REP). Interacts with host proliferating cell nuclear antigen (PCNA). Interacts with host retinoblastoma-related protein 1 (RBR1), and may thereby deregulate the host cell cycle. Oligomerization and interaction with PCNA are necessary for optimal replication enhancement.

In terms of biological role, increases viral DNA accumulation. Enhances infectivity and symptom expression. This Manihot esculenta (Cassava) protein is Replication enhancer protein.